A 61-amino-acid chain; its full sequence is Probable tautomerase lin2709 (61 aa).

The Proton acceptor; via imino nitrogen role is filled by Pro2.

This sequence belongs to the 4-oxalocrotonate tautomerase family.

This Listeria innocua serovar 6a (strain ATCC BAA-680 / CLIP 11262) protein is Probable tautomerase lin2709.